The sequence spans 125 residues: Large ribosomal subunit protein bL12 (125 aa).

Belongs to the bacterial ribosomal protein bL12 family. As to quaternary structure, homodimer. Part of the ribosomal stalk of the 50S ribosomal subunit. Forms a multimeric L10(L12)X complex, where L10 forms an elongated spine to which 2 to 4 L12 dimers bind in a sequential fashion. Binds GTP-bound translation factors.

In terms of biological role, forms part of the ribosomal stalk which helps the ribosome interact with GTP-bound translation factors. Is thus essential for accurate translation. This Coprothermobacter proteolyticus (strain ATCC 35245 / DSM 5265 / OCM 4 / BT) protein is Large ribosomal subunit protein bL12.